Reading from the N-terminus, the 430-residue chain is UDP-glucuronate 4-epimerase 3 (430 aa).

The next 2 membrane-spanning stretches (helical) occupy residues 29–49 (SVAKLAFWSLVFVGLIFIFFY) and 90–110 (GFSVLVTGAAGFVGTHVSAAL). Residue 92–123 (SVLVTGAAGFVGTHVSAALKRRGDGVLGLDNF) coordinates NAD(+). Tyr242 acts as the Proton acceptor in catalysis.

Belongs to the NAD(P)-dependent epimerase/dehydratase family. As to quaternary structure, homodimer. In roots, leaves, siliques, flowers, pollen and stems.

The protein resides in the golgi apparatus. It localises to the golgi stack membrane. It carries out the reaction UDP-alpha-D-glucuronate = UDP-alpha-D-galacturonate. In terms of biological role, involved in the synthesis of the negatively charged monosaccharide that forms the backbone of pectic cell wall components. This chain is UDP-glucuronate 4-epimerase 3 (GAE3), found in Arabidopsis thaliana (Mouse-ear cress).